The primary structure comprises 568 residues: Dihydroxy-acid dehydratase (568 aa).

A [2Fe-2S] cluster-binding site is contributed by Cys59. Residue Asp91 participates in Mg(2+) binding. Residue Cys132 participates in [2Fe-2S] cluster binding. Positions 133 and 134 each coordinate Mg(2+). Lys134 is subject to N6-carboxylysine. A [2Fe-2S] cluster-binding site is contributed by Cys204. Glu456 is a binding site for Mg(2+). The active-site Proton acceptor is Ser482.

It belongs to the IlvD/Edd family. As to quaternary structure, homodimer. [2Fe-2S] cluster is required as a cofactor. The cofactor is Mg(2+).

The catalysed reaction is (2R)-2,3-dihydroxy-3-methylbutanoate = 3-methyl-2-oxobutanoate + H2O. It carries out the reaction (2R,3R)-2,3-dihydroxy-3-methylpentanoate = (S)-3-methyl-2-oxopentanoate + H2O. Its pathway is amino-acid biosynthesis; L-isoleucine biosynthesis; L-isoleucine from 2-oxobutanoate: step 3/4. The protein operates within amino-acid biosynthesis; L-valine biosynthesis; L-valine from pyruvate: step 3/4. Functionally, functions in the biosynthesis of branched-chain amino acids. Catalyzes the dehydration of (2R,3R)-2,3-dihydroxy-3-methylpentanoate (2,3-dihydroxy-3-methylvalerate) into 2-oxo-3-methylpentanoate (2-oxo-3-methylvalerate) and of (2R)-2,3-dihydroxy-3-methylbutanoate (2,3-dihydroxyisovalerate) into 2-oxo-3-methylbutanoate (2-oxoisovalerate), the penultimate precursor to L-isoleucine and L-valine, respectively. The sequence is that of Dihydroxy-acid dehydratase from Verminephrobacter eiseniae (strain EF01-2).